A 151-amino-acid polypeptide reads, in one-letter code: 6,7-dimethyl-8-ribityllumazine synthase (151 aa).

5-amino-6-(D-ribitylamino)uracil is bound by residues Phe-15, 49 to 51 (AVE), and 73 to 75 (AVI). 78 to 79 (ET) serves as a coordination point for (2S)-2-hydroxy-3-oxobutyl phosphate. The Proton donor role is filled by His-81. Residue Phe-106 coordinates 5-amino-6-(D-ribitylamino)uracil. Arg-120 serves as a coordination point for (2S)-2-hydroxy-3-oxobutyl phosphate.

This sequence belongs to the DMRL synthase family. As to quaternary structure, forms an icosahedral capsid composed of 60 subunits, arranged as a dodecamer of pentamers.

The enzyme catalyses (2S)-2-hydroxy-3-oxobutyl phosphate + 5-amino-6-(D-ribitylamino)uracil = 6,7-dimethyl-8-(1-D-ribityl)lumazine + phosphate + 2 H2O + H(+). It functions in the pathway cofactor biosynthesis; riboflavin biosynthesis; riboflavin from 2-hydroxy-3-oxobutyl phosphate and 5-amino-6-(D-ribitylamino)uracil: step 1/2. In terms of biological role, catalyzes the formation of 6,7-dimethyl-8-ribityllumazine by condensation of 5-amino-6-(D-ribitylamino)uracil with 3,4-dihydroxy-2-butanone 4-phosphate. This is the penultimate step in the biosynthesis of riboflavin. The protein is 6,7-dimethyl-8-ribityllumazine synthase of Coxiella burnetii (strain Dugway 5J108-111).